The chain runs to 879 residues: Oxysterol-binding protein-related protein 5 (879 aa).

The disordered stretch occupies residues 1 to 73; it reads MKEEAFLRRR…TPSSATKVPP (73 aa). A Phosphoserine modification is found at serine 12. A coiled-coil region spans residues 93 to 123; it reads VTKKETLKAQKENYRQEKKRATRQLLSALTD. Residues 126 to 243 form the PH domain; the sequence is VVIMADSLKI…WLDALELALR (118 aa). The interval 254–341 is disordered; the sequence is KPGRDGEPGT…TPGAPVRRGT (88 aa). 2 stretches are compositionally biased toward basic and acidic residues: residues 300–309 and 316–325; these read FSDKSERENP and TQDHSRKTES. A 1,2-diacyl-sn-glycero-3-phospho-(1D-myo-inositol 4-phosphate)-binding positions include 384–389, 446–449, and 478–479; these read LSRVVL, KPYN, and HH. Residues 384–389 and asparagine 449 each bind a 1,2-diacyl-sn-glycero-3-phospho-L-serine; that span reads LSRVVL. Serine 504 is an a 1,2-diacyl-sn-glycero-3-phospho-L-serine binding site. The a 1,2-diacyl-sn-glycero-3-phospho-(1D-myo-inositol 4-phosphate) site is built by lysine 670, glutamate 674, and arginine 678. The interval 742 to 806 is disordered; it reads TTFLGSPGPR…FVPGGESPCP (65 aa). A Phosphoserine modification is found at serine 747. Positions 750 to 765 are enriched in basic and acidic residues; it reads PRHERSGPDQRLRKAS. A compositionally biased stretch (polar residues) spans 766–783; that stretch reads DQPSGHSQATESSGSTPE. The helical transmembrane segment at 860–878 threads the bilayer; sequence SWFLLCVFLACQLFINHIL.

This sequence belongs to the OSBP family. As to expression, ubiquitously expressed.

The protein resides in the endoplasmic reticulum membrane. Its function is as follows. Lipid transporter involved in lipid countertransport between the endoplasmic reticulum and the plasma membrane: specifically exchanges phosphatidylserine with phosphatidylinositol 4-phosphate (PI4P), delivering phosphatidylserine to the plasma membrane in exchange for PI4P, which is degraded by the SAC1/SACM1L phosphatase in the endoplasmic reticulum. Binds phosphatidylserine and PI4P in a mutually exclusive manner. May cooperate with NPC1 to mediate the exit of cholesterol from endosomes/lysosomes. Binds 25-hydroxycholesterol and cholesterol. The chain is Oxysterol-binding protein-related protein 5 (OSBPL5) from Homo sapiens (Human).